The sequence spans 593 residues: UvrABC system protein C (593 aa).

One can recognise a GIY-YIG domain in the interval 17–94 (MEPGCYLMKD…IKQYQPRYNI (78 aa)). The 36-residue stretch at 199-234 (KTILKSLEERMLTASESLDFERAKEYRDLIQHIQNL) folds into the UVR domain.

The protein belongs to the UvrC family. In terms of assembly, interacts with UvrB in an incision complex.

Its subcellular location is the cytoplasm. The UvrABC repair system catalyzes the recognition and processing of DNA lesions. UvrC both incises the 5' and 3' sides of the lesion. The N-terminal half is responsible for the 3' incision and the C-terminal half is responsible for the 5' incision. The chain is UvrABC system protein C from Staphylococcus aureus (strain bovine RF122 / ET3-1).